The primary structure comprises 153 residues: Gastric inhibitory polypeptide (153 aa).

The first 21 residues, 1–21 (MVATKTFALLLLSLFLAVGLG), serve as a signal peptide directing secretion. 2 propeptides span residues 22-50 (EKKEGHFSALPSLPVGSHAKVSSPQPRGP) and 95-153 (EARA…LRSR). Residues 102–125 (ASQANRKEEEAVEPQSSPAKNPSD) form a disordered region.

Belongs to the glucagon family.

The protein resides in the secreted. Functionally, potent stimulator of insulin secretion and relatively poor inhibitor of gastric acid secretion. The polypeptide is Gastric inhibitory polypeptide (GIP) (Homo sapiens (Human)).